Reading from the N-terminus, the 843-residue chain is Glycogen phosphorylase, brain form (843 aa).

The residue at position 2 (A2) is an N-acetylalanine. At S15 the chain carries Phosphoserine; by PHK; in form phosphorylase A. The AMP site is built by D43, Y197, and R310. Y197 is subject to Phosphotyrosine. Residue Y473 is modified to Phosphotyrosine. S524 bears the Phosphoserine mark. Position 569 (K569) interacts with pyridoxal 5'-phosphate. The segment at 677–678 is pyridoxal 5'-phosphate; sequence TG. Position 681 is an N6-(pyridoxal phosphate)lysine (K681).

Belongs to the glycogen phosphorylase family. Homodimer. Dimers associate into a tetramer to form the enzymatically active phosphorylase A. The cofactor is pyridoxal 5'-phosphate. In terms of processing, phosphorylation of Ser-15 converts phosphorylase B (unphosphorylated) to phosphorylase A.

The catalysed reaction is [(1-&gt;4)-alpha-D-glucosyl](n) + phosphate = [(1-&gt;4)-alpha-D-glucosyl](n-1) + alpha-D-glucose 1-phosphate. Its activity is regulated as follows. Activity of phosphorylase is controlled both by allosteric means (through the non-covalent binding of metabolites) and by covalent modification. Thus AMP allosterically activates, whereas ATP, ADP, and glucose-6-phosphate allosterically inhibit, phosphorylase B. In terms of biological role, glycogen phosphorylase that regulates glycogen mobilization. Phosphorylase is an important allosteric enzyme in carbohydrate metabolism. Enzymes from different sources differ in their regulatory mechanisms and in their natural substrates. However, all known phosphorylases share catalytic and structural properties. In Mus musculus (Mouse), this protein is Glycogen phosphorylase, brain form (Pygb).